Here is a 660-residue protein sequence, read N- to C-terminus: Acetyl-coenzyme A synthetase (660 aa).

Residues 197–200 (RGGK) and T317 each bind CoA. ATP-binding positions include 397–399 (GEP), 421–426 (DTWWQT), D512, and R528. CoA is bound at residue S536. R539 is a binding site for ATP. V550, H552, and V555 together coordinate Mg(2+). K625 carries the N6-acetyllysine modification.

It belongs to the ATP-dependent AMP-binding enzyme family. Requires Mg(2+) as cofactor. Post-translationally, acetylated. Deacetylation by the SIR2-homolog deacetylase activates the enzyme.

The catalysed reaction is acetate + ATP + CoA = acetyl-CoA + AMP + diphosphate. Catalyzes the conversion of acetate into acetyl-CoA (AcCoA), an essential intermediate at the junction of anabolic and catabolic pathways. AcsA undergoes a two-step reaction. In the first half reaction, AcsA combines acetate with ATP to form acetyl-adenylate (AcAMP) intermediate. In the second half reaction, it can then transfer the acetyl group from AcAMP to the sulfhydryl group of CoA, forming the product AcCoA. The sequence is that of Acetyl-coenzyme A synthetase from Burkholderia mallei (strain NCTC 10247).